Consider the following 128-residue polypeptide: Large ribosomal subunit protein bL12 (128 aa).

The protein belongs to the bacterial ribosomal protein bL12 family. In terms of assembly, homodimer. Part of the ribosomal stalk of the 50S ribosomal subunit. Forms a multimeric L10(L12)X complex, where L10 forms an elongated spine to which 2 to 4 L12 dimers bind in a sequential fashion. Binds GTP-bound translation factors.

Functionally, forms part of the ribosomal stalk which helps the ribosome interact with GTP-bound translation factors. Is thus essential for accurate translation. This chain is Large ribosomal subunit protein bL12, found in Desulfovibrio desulfuricans (strain ATCC 27774 / DSM 6949 / MB).